We begin with the raw amino-acid sequence, 173 residues long: Translation initiation factor IF-3 (173 aa).

It belongs to the IF-3 family. As to quaternary structure, monomer.

It localises to the cytoplasm. Its function is as follows. IF-3 binds to the 30S ribosomal subunit and shifts the equilibrium between 70S ribosomes and their 50S and 30S subunits in favor of the free subunits, thus enhancing the availability of 30S subunits on which protein synthesis initiation begins. The protein is Translation initiation factor IF-3 of Methylorubrum extorquens (strain CM4 / NCIMB 13688) (Methylobacterium extorquens).